The sequence spans 575 residues: Kelch repeat and BTB domain-containing protein 8 (575 aa).

The 69-residue stretch at 23–91 (TDIVVEVDHG…AYTSRVILTE (69 aa)) folds into the BTB domain. The BACK domain maps to 126 to 228 (SIGVFIFADH…MEDAFIEKIP (103 aa)). 5 Kelch repeats span residues 310–364 (DIYI…YCCG), 365–415 (KMYA…EHKE), 417–455 (IYVLQGEFFLFYEPQKDYWGFLTPMTVPRIQGLAAVYKD), 457–506 (IYYI…LFQN), and 516–562 (QVTV…FECA).

Belongs to the KBTBD8 family. Component of the BCR(KBTBD8) E3 ubiquitin ligase complex, at least composed of CUL3, KBTBD8 and RBX1.

The protein resides in the cytoplasm. It localises to the cytoskeleton. Its subcellular location is the spindle. The protein localises to the golgi apparatus. In terms of biological role, substrate-specific adapter of a BCR (BTB-CUL3-RBX1) E3 ubiquitin ligase complex that acts as a regulator of neural crest specification. The BCR(KBTBD8) complex acts by mediating monoubiquitination of NOLC1 and TCOF1: monoubiquitination promotes the formation of a NOLC1-TCOF1 complex that acts as a platform to connect RNA polymerase I with enzymes responsible for ribosomal processing and modification, leading to remodel the translational program of differentiating cells in favor of neural crest specification. The chain is Kelch repeat and BTB domain-containing protein 8 from Rattus norvegicus (Rat).